We begin with the raw amino-acid sequence, 353 residues long: D-alanine--D-alanine ligase (353 aa).

One can recognise an ATP-grasp domain in the interval 141–349 (KAAFAAAGLP…LEELVSQLVI (209 aa)). 176 to 231 (EAKLKYPCFVKPANLGSSVGISKAQNRNELLIGLDKAASLDRRIVVEQGVSARELE) contacts ATP. Residues Asp302, Glu316, and Asn318 each contribute to the Mg(2+) site.

The protein belongs to the D-alanine--D-alanine ligase family. Mg(2+) serves as cofactor. It depends on Mn(2+) as a cofactor.

The protein resides in the cytoplasm. It catalyses the reaction 2 D-alanine + ATP = D-alanyl-D-alanine + ADP + phosphate + H(+). The protein operates within cell wall biogenesis; peptidoglycan biosynthesis. In terms of biological role, cell wall formation. The protein is D-alanine--D-alanine ligase of Prochlorococcus marinus (strain MIT 9303).